Reading from the N-terminus, the 1665-residue chain is Protein scribble homolog (1665 aa).

A sufficient for targeting to adherens junction and to inhibit cell proliferation region spans residues 1-804; the sequence is MLKCIPLWRC…MRVWRERMVE (804 aa). A Phosphoserine modification is found at Ser37. LRR repeat units follow at residues 37–58, 60–81, 83–104, 106–127, 129–150, 152–174, 175–197, 198–219, 221–243, 244–265, 267–288, 290–312, 313–334, 336–357, 359–381, and 382–402; these read SLEE…FFRL, NLRK…VANF, QLVE…IKFC, ALEI…FTQL, SLAH…VGNL, NLVT…SFLV, KLEQ…GALP, NLRE…LGNL, RLVC…GGLA, LLTD…IGQL, QLSI…IGDC, NLSE…GKLT, KLTN…IGGC, ALSV…LAHT, ELHV…THLN, and LKAL…QTED. Thr378 is modified (phosphothreonine). Disordered stretches follow at residues 422 to 615 and 635 to 689; these read PSLE…HFKI and REGP…SAPS. The span at 428–437 shows a compositional bias: polar residues; the sequence is GQQSSPSESC. Residues 452 to 463 show a composition bias toward acidic residues; it reads DTLEGEEDAEEA. Residues 455–475 are a coiled coil; it reads EGEEDAEEAAAEKRGLQRRAT. Thr475 carries the post-translational modification Phosphothreonine. 2 stretches are compositionally biased toward basic and acidic residues: residues 479-494 and 570-580; these read SELK…RRNE and FAEDTLIPRED. Ser583 carries the phosphoserine modification. Residues 653 to 687 are a coiled coil; sequence RAHEEEEEEEEENRDEEEGEATTEEDDKEEAVASA. Positions 657–681 are enriched in acidic residues; the sequence is EEEEEEEENRDEEEGEATTEEDDKE. Thr674 and Thr675 each carry phosphothreonine. Phosphoserine occurs at positions 694 and 750. Positions 703–1215 are interaction with ARHGEF7; the sequence is IEPARIEEEE…SLESISSIDR (513 aa). Residues 714–801 enclose the PDZ 1 domain; it reads TLTIVRQTGG…AVQMRVWRER (88 aa). Residues 714 to 1180 form a required for interaction with VIM region; it reads TLTIVRQTGG…TVLVCDGFDT (467 aa). At Thr812 the chain carries Phosphothreonine. 3 positions are modified to phosphoserine: Ser821, Ser861, and Ser925. PDZ domains follow at residues 848-936, 990-1079, and 1086-1180; these read AACL…ERET, EICL…RRDP, and ELCI…GFDT. Ser1126, Ser1206, Ser1209, Ser1212, Ser1218, Ser1262, Ser1265, and Ser1284 each carry phosphoserine. Residues 1213 to 1228 show a composition bias toward basic and acidic residues; sequence IDRELSPEGPGKEKEL. Positions 1213–1246 are disordered; the sequence is IDRELSPEGPGKEKELASQALPWESESAETTGRN. Disordered stretches follow at residues 1263 to 1325 and 1341 to 1501; these read AGSL…DELP and VHPP…AERR. Residues 1264–1277 show a composition bias toward polar residues; it reads GSLQRGPSATTGGK. Lys1291 bears the Omega-N-methylarginine mark. Ala1299 is subject to Phosphoserine. Arg1312 bears the Omega-N-methylarginine mark. Residue Ser1320 is modified to Phosphoserine. Residue Thr1353 is modified to Phosphothreonine. Ser1359 carries the post-translational modification Phosphoserine. Over residues 1364-1376 the composition is skewed to basic and acidic residues; that stretch reads SFRERQKYFELEV. A Phosphoserine modification is found at Ser1389. The stretch at 1390 to 1421 forms a coiled coil; it reads LVGADDLRKMQEEEARKLQQKRAQMLREEAVT. A compositionally biased stretch (basic and acidic residues) spans 1394 to 1406; sequence DDLRKMQEEEARK. Residues Ser1455 and Ser1458 each carry the phosphoserine modification. Basic and acidic residues predominate over residues 1471–1482; that stretch reads AKAERRHQERLR. Ser1485, Ser1496, and Ser1518 each carry phosphoserine. The disordered stretch occupies residues 1530 to 1577; sequence LSKSQEGRGKRGPLERLAEAPSPAPTPSPTPLEDFGLQTSASPGRLPL. The span at 1534-1547 shows a compositional bias: basic and acidic residues; that stretch reads QEGRGKRGPLERLA. Ser1551 carries the post-translational modification Phosphoserine. The residue at position 1555 (Thr1555) is a Phosphothreonine. 3 positions are modified to phosphoserine: Ser1557, Ser1571, and Ser1601. The interval 1632–1665 is disordered; it reads GRPSPGAVGPEDMTLCSSRRSVRPGRRGLGPVPS.

It belongs to the LAP (LRR and PDZ) protein family. In terms of assembly, interacts with UBE3A. Interacts with PAK1 and PAK2. Interacts (via PDZ domains) with VANGL2. Interacts (via PDZ domains) with LPP and TRIP6; the interaction is direct. Interacts (via PDZ domains) with TJP2. Interacts (via PDZ domains) with APC; may mediate APC targeting to adherens junctions of epithelial cells. Interacts (via PDZ domains) with TSHR; regulates TSHR trafficking and function. Interacts with ARHGEF7 and GIT1; interacts directly with ARHGEF7. Interacts with CTNNB1. Interacts with MAPK12. Interacts (via PDZ domains 1 and 3) with MCC. Interacts with DLG5. Interacts with STK4/MST1 and LATS1 in the presence of DLG5. Interacts (via PDZ domain 3) with CRTAM (via PDZ-binding motif); the interaction promotes CRTAM and SCRIB polarization in a subset of CD4+ T-cells. Interacts with YES1, when YES1 is in a closed conformation; the interaction facilitates YES1 autophosphorylation. Interacts (via PDZ domains) with VIM; the interaction protects SCRIB from proteasomal degradation and facilitates SCRIB localization to intermediate filaments, the interaction is reduced by cell contact inhibition. In terms of processing, ubiquitinated; targeted for UBE3A-dependent multiubiquitination and degraded. Post-translationally, palmitoylated. Could be depalmitoylated by LYPLA1 and/or LYPLA2. Palmitoylation of SCRIB by ZDHHC7 is required for its localization to cell-cell junctions, function in the establishement of epithelial cell polarity and the regulation of downstream signaling pathways important for epithelial cell differentiation. Expressed in CD4+ T-cells (at protein level). Found in a wide range of tissues including liver, kidney and spleen. Also expressed in the brain (at protein level).

It is found in the cell membrane. Its subcellular location is the cell junction. The protein resides in the adherens junction. The protein localises to the cell projection. It localises to the lamellipodium. It is found in the cytoplasm. Its subcellular location is the postsynapse. The protein resides in the presynapse. Scaffold protein involved in different aspects of polarized cell differentiation regulating epithelial and neuronal morphogenesis and T-cell polarization. Via its interaction with CRTAM, required for the late phase polarization of a subset of CD4+ T-cells, which in turn regulates TCR-mediated proliferation and IFNG and IL22 production. Plays a role in cell directional movement, cell orientation, cell sheet organization and Golgi complex polarization at the cell migration front. Promotes epithelial cell layer barrier function via maintaining cell-cell adhesion. Most probably functions in the establishment of apico-basal cell polarity. May function in cell proliferation regulating progression from G1 to S phase and as a positive regulator of apoptosis for instance during acinar morphogenesis of the mammary epithelium. May regulate cell invasion via MAPK-mediated cell migration and adhesion. May play a role in exocytosis and in the targeting of synaptic vesicles to synapses. Functions as an activator of Rac GTPase activity. In Mus musculus (Mouse), this protein is Protein scribble homolog.